Consider the following 274-residue polypeptide: Bis(5'-nucleosyl)-tetraphosphatase, symmetrical (274 aa).

It belongs to the Ap4A hydrolase family.

It catalyses the reaction P(1),P(4)-bis(5'-adenosyl) tetraphosphate + H2O = 2 ADP + 2 H(+). In terms of biological role, hydrolyzes diadenosine 5',5'''-P1,P4-tetraphosphate to yield ADP. This chain is Bis(5'-nucleosyl)-tetraphosphatase, symmetrical, found in Shewanella sp. (strain ANA-3).